Consider the following 149-residue polypeptide: Transcriptional repressor NrdR (149 aa).

The segment at 3–34 (CPFCSHSETQVVETRISEDGDSIRRRRQCASC) is a zinc-finger region. Positions 49-139 (PAIVKKDGRR…VYRSFEDIDE (91 aa)) constitute an ATP-cone domain.

Belongs to the NrdR family. Zn(2+) serves as cofactor.

In terms of biological role, negatively regulates transcription of bacterial ribonucleotide reductase nrd genes and operons by binding to NrdR-boxes. This is Transcriptional repressor NrdR from Albidiferax ferrireducens (strain ATCC BAA-621 / DSM 15236 / T118) (Rhodoferax ferrireducens).